Here is a 757-residue protein sequence, read N- to C-terminus: MSNPGTRRNGSSIKIRLTVLCAKNLAKKDFFRLPDPFAKIVVDGSGQCHSTDTVKNTLDPKWNQHYDLYVGKTDSITISVWNHKKIHKKQGAGFLGCVRLLSNAISRLKDTGYQRLDLCKLNPSDTDAVRGQIVVSLQTRDRIGTGGSVVDCRGLLENEGTVYEDSGPGRPLSCFMEEPAPYTDSTGAAAGGGNCRFVESPSQDQRLQAQRLRNPDVRGSLQTPQNRPHGHQSPELPEGYEQRTTVQGQVYFLHTQTGVSTWHDPRIPSPSGTIPGGDAAFLYEFLLQGHTSEPRDLNSVNCDELGPLPPGWEVRSTVSGRIYFVDHNNRTTQFTDPRLHHIMNHQCQLKEPSQPLPLPSEGSLEDEELPAQRYERDLVQKLKVLRHELSLQQPQAGHCRIEVSREEIFEESYRQIMKMRPKDLKKRLMVKFRGEEGLDYGGVAREWLYLLCHEMLNPYYGLFQYSTDNIYMLQINPDSSINPDHLSYFHFVGRIMGLAVFHGHYINGGFTVPFYKQLLGKPIQLSDLESVDPELHKSLVWILENDITPVLDHTFCVEHNAFGRILQHELKPNGRNVPVTEENKKEYVRLYVNWRFMRGIEAQFLALQKGFNELIPQHLLKPFDQKELELIIGGLDKIDLNDWKSNTRLKHCVADSNIVRWFWQAVETFDEERRARLLQFVTGSTRVPLQGFKALQGSTGAAGPRLFTIHLIDANTDNLPKAHTCFNRIDIPPYESYEKLYEKLLTAVEETCGFAVE.

A C2 domain is found at 1–120; that stretch reads MSNPGTRRNG…TGYQRLDLCK (120 aa). Positions 193-237 are disordered; the sequence is GNCRFVESPSQDQRLQAQRLRNPDVRGSLQTPQNRPHGHQSPELP. Position 200 is a phosphoserine (serine 200). WW domains are found at residues 234-267 and 306-339; these read PELP…DPRI and GPLP…DPRL. Residues lysine 381 and lysine 383 each participate in a glycyl lysine isopeptide (Lys-Gly) (interchain with G-Cter in ubiquitin) cross-link. The HECT domain maps to 420-757; it reads RPKDLKKRLM…VEETCGFAVE (338 aa). Catalysis depends on cysteine 725, which acts as the Glycyl thioester intermediate.

In terms of assembly, interacts with TRAF4. Interacts (via HECT domain) with FBXL15 (via LRR repeats). Interacts with SMAD7 and TGFBR1; SMAD7 recruits SMURF1 to TGFBR1 and regulates TGF-beta receptor degradation. Interacts with MAVS; the interaction is mediated by NDFIP1. Auto-ubiquitinated in presence of NDFIP1. Ubiquitinated by the SCF(FBXL15) complex at Lys-381 and Lys-383, leading to its degradation by the proteasome. Lys-383 is the primary ubiquitination site. Expressed in melanocytes.

The protein resides in the cytoplasm. The protein localises to the cell membrane. It carries out the reaction S-ubiquitinyl-[E2 ubiquitin-conjugating enzyme]-L-cysteine + [acceptor protein]-L-lysine = [E2 ubiquitin-conjugating enzyme]-L-cysteine + N(6)-ubiquitinyl-[acceptor protein]-L-lysine.. It functions in the pathway protein modification; protein ubiquitination. Its function is as follows. E3 ubiquitin-protein ligase that acts as a negative regulator of BMP signaling pathway. Mediates ubiquitination and degradation of SMAD1 and SMAD5, 2 receptor-regulated SMADs specific for the BMP pathway. Promotes ubiquitination and subsequent proteasomal degradation of TRAF family members and RHOA. Promotes ubiquitination and subsequent proteasomal degradation of MAVS. Acts as an antagonist of TGF-beta signaling by ubiquitinating TGFBR1 and targeting it for degradation. Plays a role in dendrite formation by melanocytes. The chain is E3 ubiquitin-protein ligase SMURF1 (SMURF1) from Homo sapiens (Human).